Reading from the N-terminus, the 274-residue chain is MQQLQNIIETAFERRAEITPTNADTVTREAVNQVIALLDSGALRVAEKIDGQWVTHQWLKKAVLLSFRINDNQVIEGAESRYFDKVPMKFADYDEARFQKEGFRVVPPAAVRQGAFIARNTVLMPSYVNIGAYVDEGTMVDTWATVGSCAQIGKNVHLSGGVGIGGVLEPLQANPTIIEDNCFIGARSEVVEGVIVEEGSVISMGVYIGQSTRIYDRETGEIHYGHVPAGSVVVSGNLPSKDGKYSLYCAVIVKKVDAKTRGKVGINELLRTID.

Substrate contacts are provided by arginine 104 and aspartate 141.

Belongs to the transferase hexapeptide repeat family. In terms of assembly, homotrimer.

The protein localises to the cytoplasm. The catalysed reaction is (S)-2,3,4,5-tetrahydrodipicolinate + succinyl-CoA + H2O = (S)-2-succinylamino-6-oxoheptanedioate + CoA. It functions in the pathway amino-acid biosynthesis; L-lysine biosynthesis via DAP pathway; LL-2,6-diaminopimelate from (S)-tetrahydrodipicolinate (succinylase route): step 1/3. In Shigella boydii serotype 4 (strain Sb227), this protein is 2,3,4,5-tetrahydropyridine-2,6-dicarboxylate N-succinyltransferase.